We begin with the raw amino-acid sequence, 136 residues long: Large ribosomal subunit protein uL16 (136 aa).

It belongs to the universal ribosomal protein uL16 family. As to quaternary structure, part of the 50S ribosomal subunit.

Functionally, binds 23S rRNA and is also seen to make contacts with the A and possibly P site tRNAs. This Ehrlichia chaffeensis (strain ATCC CRL-10679 / Arkansas) protein is Large ribosomal subunit protein uL16.